Reading from the N-terminus, the 305-residue chain is 3-methyl-2-oxobutanoate hydroxymethyltransferase (305 aa).

Residues D52 and D95 each coordinate Mg(2+). 3-methyl-2-oxobutanoate is bound by residues 52 to 53 (DS), D95, and K125. Mg(2+) is bound at residue E127. The active-site Proton acceptor is E194.

Belongs to the PanB family. In terms of assembly, homodecamer; pentamer of dimers. Requires Mg(2+) as cofactor.

It is found in the cytoplasm. It carries out the reaction 3-methyl-2-oxobutanoate + (6R)-5,10-methylene-5,6,7,8-tetrahydrofolate + H2O = 2-dehydropantoate + (6S)-5,6,7,8-tetrahydrofolate. It participates in cofactor biosynthesis; (R)-pantothenate biosynthesis; (R)-pantoate from 3-methyl-2-oxobutanoate: step 1/2. Its function is as follows. Catalyzes the reversible reaction in which hydroxymethyl group from 5,10-methylenetetrahydrofolate is transferred onto alpha-ketoisovalerate to form ketopantoate. The polypeptide is 3-methyl-2-oxobutanoate hydroxymethyltransferase (Anaeromyxobacter sp. (strain Fw109-5)).